A 231-amino-acid chain; its full sequence is 4-aminobenzoate synthase (231 aa).

6 residues coordinate Fe(2+): glutamate 81, histidine 88, glutamate 142, histidine 174, aspartate 178, and histidine 181.

Belongs to the CADD family. In terms of assembly, homodimer. During infection, interacts with death domains of mammalian tumor necrosis factor (TNF) family receptors Fas, DR4, DR5 and to some extent TNFR1, but not with the respective downstream adapters. Fe(2+) serves as cofactor. Mn(2+) is required as a cofactor.

It is found in the secreted. It localises to the host cytoplasm. With respect to regulation, the protein is a cosubstrate rather than a true enzyme and is left in an inactive state after a single turnover. Inactive under anaerobic conditions. Its function is as follows. Involved in de novo para-aminobenzoate (PABA) biosynthesis. Acts as a self-sacrificing or 'suicide' enzyme that utilizes its own active site tyrosine residue(s) as the substrate for PABA synthesis. The side chain of the tyrosine residue is released from the protein backbone via cleavage of the C(alpha)-C(beta) bond, leaving a glycine in place of the original tyrosine residue. Reaction requires O(2) and a reduced dimetal cofactor. Was also identified as a specific toxin that associates with death domains of tumor necrosis factor family (TNF) receptors and induces apoptosis in mammalian cell lines through a Caspase-dependent mechanism. This is 4-aminobenzoate synthase from Chlamydia trachomatis serovar D (strain ATCC VR-885 / DSM 19411 / UW-3/Cx).